A 544-amino-acid chain; its full sequence is Zinc finger and SCAN domain-containing protein 25 (544 aa).

Residues Lys3 and Lys22 each participate in a glycyl lysine isopeptide (Lys-Gly) (interchain with G-Cter in SUMO2) cross-link. In terms of domain architecture, SCAN box spans 42–124 (RLRFRQFRYQ…AMVEDLTERA (83 aa)). Residue Lys128 forms a Glycyl lysine isopeptide (Lys-Gly) (interchain with G-Cter in SUMO2) linkage. Residues 157–189 (VEVKPEWGMPPGEGVQGPDPGTEEQLSQDPGDE) are disordered. Glycyl lysine isopeptide (Lys-Gly) (interchain with G-Cter in SUMO2) cross-links involve residues Lys278 and Lys285. 6 consecutive C2H2-type zinc fingers follow at residues 348-370 (FQCP…QRTH), 375-397 (YGCV…QRTH), 403-425 (YVCS…QRSH), 431-453 (YKCG…RRTH), 459-480 (YTCE…RRAH), and 486-508 (YGCQ…QRIH). Residues 514-536 (YHCPACGRSFNQRSILNRHQKTQ) form a C2H2-type 7; degenerate zinc finger.

The protein belongs to the krueppel C2H2-type zinc-finger protein family.

It is found in the nucleus. Functionally, may be involved in transcriptional regulation. The chain is Zinc finger and SCAN domain-containing protein 25 (ZSCAN25) from Homo sapiens (Human).